A 65-amino-acid chain; its full sequence is Large ribosomal subunit protein bL35 (65 aa).

The protein belongs to the bacterial ribosomal protein bL35 family.

This chain is Large ribosomal subunit protein bL35, found in Oleidesulfovibrio alaskensis (strain ATCC BAA-1058 / DSM 17464 / G20) (Desulfovibrio alaskensis).